Reading from the N-terminus, the 238-residue chain is Survival of motor neuron-related-splicing factor 30 (238 aa).

A Tudor domain is found at 72 to 132 (SWKVGEKCMA…RPVEEGRKAK (61 aa)). A Nuclear localization signal motif is present at residues 142–160 (KKEMIAAQREYKKKKALKK).

The protein belongs to the SMN family. In terms of assembly, associates with spliceosomes.

It is found in the nucleus speckle. The protein resides in the nucleus. Its subcellular location is the cajal body. Involved in spliceosome assembly. The protein is Survival of motor neuron-related-splicing factor 30 (smndc1) of Xenopus tropicalis (Western clawed frog).